The primary structure comprises 528 residues: Importin subunit alpha-7 (528 aa).

The 56-residue stretch at 1–56 folds into the IBB domain; the sequence is MKGGETMSVRRSGYKAVVDGVGGRRRREDDMVEIRKAKREESLLKKRREALPHSPS. ARM repeat units lie at residues 93-133, 136-175, 178-218, 220-259, 262-301, 304-344, 347-386, and 390-429; these read NVRV…NIAS, SENT…NISG, PRCR…NLCR, KPQP…YLSD, NEKI…NIVT, DSQT…NITA, QSQI…NAIA, and YKQI…KILK.

It belongs to the importin alpha family. Forms a complex with importin subunit beta-1.

It is found in the nucleus envelope. Binds to conventional NLS motifs and mediates nuclear protein import across the nuclear envelope. Acts as a cellular receptor for the nuclear import of the virD2 protein of Agrobacterium, but is not essential for Agrobacterium-mediated root transformation. The polypeptide is Importin subunit alpha-7 (Arabidopsis thaliana (Mouse-ear cress)).